The chain runs to 380 residues: Cytochrome b (380 aa).

A run of 4 helical transmembrane segments spans residues 34–54 (FGSL…LLAM), 78–99 (WLIR…YLHI), 114–134 (WNTG…GYVL), and 179–199 (FFAL…IHLT). 2 residues coordinate heme b: His84 and His98. Residues His183 and His197 each contribute to the heme b site. His202 lines the a ubiquinone pocket. The next 4 helical transmembrane spans lie at 227 to 247 (LKDI…ALFS), 289 to 309 (LGGV…PLLH), 321 to 341 (LSQL…WIGS), and 348 to 368 (FIII…VLFP).

It belongs to the cytochrome b family. In terms of assembly, the cytochrome bc1 complex contains 11 subunits: 3 respiratory subunits (MT-CYB, CYC1 and UQCRFS1), 2 core proteins (UQCRC1 and UQCRC2) and 6 low-molecular weight proteins (UQCRH/QCR6, UQCRB/QCR7, UQCRQ/QCR8, UQCR10/QCR9, UQCR11/QCR10 and a cleavage product of UQCRFS1). This cytochrome bc1 complex then forms a dimer. The cofactor is heme b.

It is found in the mitochondrion inner membrane. Its function is as follows. Component of the ubiquinol-cytochrome c reductase complex (complex III or cytochrome b-c1 complex) that is part of the mitochondrial respiratory chain. The b-c1 complex mediates electron transfer from ubiquinol to cytochrome c. Contributes to the generation of a proton gradient across the mitochondrial membrane that is then used for ATP synthesis. The protein is Cytochrome b (MT-CYB) of Thalassarche impavida (Albatross).